Here is a 560-residue protein sequence, read N- to C-terminus: Chaperonin GroEL 2 (560 aa).

Residues 29–32 (TIGP), 86–90 (DGTTT), Gly-413, and Asp-492 each bind ATP. Residues 520–542 (DKPEPPSAPGAEGGDPMGGMGGM) form a disordered region. The segment covering 530–542 (AEGGDPMGGMGGM) has biased composition (gly residues).

The protein belongs to the chaperonin (HSP60) family. As to quaternary structure, forms a cylinder of 14 subunits composed of two heptameric rings stacked back-to-back. Interacts with the co-chaperonin GroES.

It is found in the cytoplasm. The enzyme catalyses ATP + H2O + a folded polypeptide = ADP + phosphate + an unfolded polypeptide.. Together with its co-chaperonin GroES, plays an essential role in assisting protein folding. The GroEL-GroES system forms a nano-cage that allows encapsulation of the non-native substrate proteins and provides a physical environment optimized to promote and accelerate protein folding. The chain is Chaperonin GroEL 2 from Prochlorococcus marinus (strain NATL2A).